The sequence spans 578 residues: Glycosyltransferase family 92 protein RCOM_0530710 (578 aa).

A helical membrane pass occupies residues 21–43 (SFFSVRSLTACLSFFVFLLFISS). The 237-residue stretch at 295-531 (YELCACTMLW…QNQGSKDRAP (237 aa)) folds into the GT92 domain.

This sequence belongs to the glycosyltransferase 92 family.

Its subcellular location is the membrane. This is Glycosyltransferase family 92 protein RCOM_0530710 from Ricinus communis (Castor bean).